A 187-amino-acid polypeptide reads, in one-letter code: Peptidyl-tRNA hydrolase (187 aa).

TRNA is bound at residue Tyr-16. His-21 functions as the Proton acceptor in the catalytic mechanism. Residues Tyr-66, Asn-68, and Asn-114 each coordinate tRNA.

It belongs to the PTH family. In terms of assembly, monomer.

It is found in the cytoplasm. The enzyme catalyses an N-acyl-L-alpha-aminoacyl-tRNA + H2O = an N-acyl-L-amino acid + a tRNA + H(+). Hydrolyzes ribosome-free peptidyl-tRNAs (with 1 or more amino acids incorporated), which drop off the ribosome during protein synthesis, or as a result of ribosome stalling. In terms of biological role, catalyzes the release of premature peptidyl moieties from peptidyl-tRNA molecules trapped in stalled 50S ribosomal subunits, and thus maintains levels of free tRNAs and 50S ribosomes. The protein is Peptidyl-tRNA hydrolase of Malacoplasma penetrans (strain HF-2) (Mycoplasma penetrans).